Reading from the N-terminus, the 222-residue chain is UPF0758 protein YicR (222 aa).

The MPN domain maps to 100–222 (PLLSPEMTRE…NVSFAERGWI (123 aa)). Zn(2+) is bound by residues histidine 171, histidine 173, and aspartate 184. The short motif at 171–184 (HNHPSGCAEPSKAD) is the JAMM motif element.

Belongs to the UPF0758 family. YicR subfamily.

In Shigella boydii serotype 18 (strain CDC 3083-94 / BS512), this protein is UPF0758 protein YicR.